A 328-amino-acid polypeptide reads, in one-letter code: Stress response kinase A (328 aa).

The Proton acceptor role is filled by aspartate 201. Mg(2+)-binding residues include asparagine 206 and aspartate 217. Aspartate 217 is an active-site residue.

This sequence belongs to the SrkA/RdoA protein kinase family. Monomer. Mg(2+) serves as cofactor.

It localises to the cytoplasm. It carries out the reaction L-seryl-[protein] + ATP = O-phospho-L-seryl-[protein] + ADP + H(+). The enzyme catalyses L-threonyl-[protein] + ATP = O-phospho-L-threonyl-[protein] + ADP + H(+). Its function is as follows. A protein kinase that phosphorylates Ser and Thr residues. Probably acts to suppress the effects of stress linked to accumulation of reactive oxygen species. Probably involved in the extracytoplasmic stress response. The polypeptide is Stress response kinase A (Salmonella choleraesuis (strain SC-B67)).